Consider the following 234-residue polypeptide: Purine nucleoside phosphorylase DeoD-type (234 aa).

His-4 is a binding site for a purine D-ribonucleoside. Phosphate contacts are provided by residues Gly-20, Arg-24, Arg-43, and 87–90 (RIGS). A purine D-ribonucleoside contacts are provided by residues Glu-162, 179-181 (EME), and 203-204 (SD). Asp-204 (proton donor) is an active-site residue.

It belongs to the PNP/UDP phosphorylase family. In terms of assembly, homohexamer; trimer of homodimers.

The catalysed reaction is a purine D-ribonucleoside + phosphate = a purine nucleobase + alpha-D-ribose 1-phosphate. It carries out the reaction a purine 2'-deoxy-D-ribonucleoside + phosphate = a purine nucleobase + 2-deoxy-alpha-D-ribose 1-phosphate. Its function is as follows. Catalyzes the reversible phosphorolytic breakdown of the N-glycosidic bond in the beta-(deoxy)ribonucleoside molecules, with the formation of the corresponding free purine bases and pentose-1-phosphate. The protein is Purine nucleoside phosphorylase DeoD-type of Jannaschia sp. (strain CCS1).